The sequence spans 317 residues: Melanocyte-stimulating hormone receptor (317 aa).

The Extracellular portion of the chain corresponds to 1–37 (MAVQGFQRRLLGSLNSTPTAIPQLGLAANQTGARCLE). Asn-29 carries N-linked (GlcNAc...) asparagine glycosylation. The chain crosses the membrane as a helical span at residues 38–63 (VSIPDGLFLSLGLVSLVENVLVVATI). Over 64–72 (AKNRNLHSP) the chain is Cytoplasmic. A helical membrane pass occupies residues 73 to 93 (TYCFICCLALSDLLVSGGNVL). Over 94-118 (ETVVILLLEASALAARAAVVQPLDN) the chain is Extracellular. A helical membrane pass occupies residues 119 to 140 (VIDVITCSSMVSSLCFLGAIAV). Over 141-163 (DRYVSIFYALRYHSIVTLPRARQ) the chain is Cytoplasmic. Residues 164-183 (AIAAIWVASVLFSTLFIAYY) form a helical membrane-spanning segment. Residues 184-191 (DHAAVLLC) lie on the Extracellular side of the membrane. Residues 192 to 211 (LVVFFLAMLVXMAVLYVHML) form a helical membrane-spanning segment. Over 212 to 240 (ARACQHAQGIARLHKRQRPLHQGFGLKGA) the chain is Cytoplasmic. A helical membrane pass occupies residues 241-266 (VTLTILLGIFFLCWGPFFLHLTLIVL). The Extracellular segment spans residues 267 to 279 (CPQHPTCSCIFKN). A helical membrane pass occupies residues 280–300 (FNLFLTLIICNAIIDPLIYAF). Over 301–317 (RRQELRRTLKEGLTCSW) the chain is Cytoplasmic. Cys-315 carries S-palmitoyl cysteine lipidation.

Belongs to the G-protein coupled receptor 1 family. As to quaternary structure, interacts with MGRN1, but does not undergo MGRN1-mediated ubiquitination; this interaction competes with GNAS-binding and thus inhibits agonist-induced cAMP production. Interacts with OPN3; the interaction results in a decrease in MC1R-mediated cAMP signaling and ultimately a decrease in melanin production in melanocytes.

The protein resides in the cell membrane. Its function is as follows. Receptor for MSH (alpha, beta and gamma) and ACTH. The activity of this receptor is mediated by G proteins which activate adenylate cyclase. Mediates melanogenesis, the production of eumelanin (black/brown) and phaeomelanin (red/yellow), via regulation of cAMP signaling in melanocytes. The sequence is that of Melanocyte-stimulating hormone receptor (MC1R) from Hylobates muelleri (Mueller's Bornean gibbon).